An 876-amino-acid chain; its full sequence is Radial spoke head 10 homolog B (876 aa).

Basic and acidic residues-rich tracts occupy residues 1–16 (MVKEKKKADKKGDKSA) and 57–66 (PKRDSEHTYQ). Residues 1 to 72 (MVKEKKKADK…HTYQSEDETQ (72 aa)) form a disordered region. MORN repeat units lie at residues 86–108 (YEGEKVRGLYEGEGFAVFQGGNT), 109–131 (YHGMFSEGLMHGQGTYIWADGLK), 132–154 (YEGDFVKNIPMNHGVYTWPDGST), 155–177 (YEGEVVNGMRNGFGMFKCGTQPV), 179–201 (YIGHWCHGKRHGKGSIYYNQEGT), 204–226 (YEGDWVYNIKKGWGIRCYKSGNI), 227–249 (YEGQWENNMRHGEGRMRWLTTNE), 251–273 (YTGHWEKGIQNGFGTHTWFLKRI), 284–306 (YIGAFVNGFRHGQGKFYYASGAM), and 307–329 (YEGEWVSNKKQGRGRITFKNGRV). Disordered stretches follow at residues 360–386 (SQRSRQARGSSVSADREPETLRKLDGS) and 841–876 (EPPEVPAVQPLTPSPPKEDLVSMQTSKASPGKKKKK). The span at 373–386 (ADREPETLRKLDGS) shows a compositional bias: basic and acidic residues. Residues 752–841 (EKYEKSKDEQ…FELDITVLKE (90 aa)) adopt a coiled-coil conformation.

As to quaternary structure, interacts with RSPH6A. Does not appear to be part of the axonemal radial spoke complexes 1 or 2.

Its subcellular location is the cytoplasm. The protein localises to the cytoskeleton. The protein resides in the cilium axoneme. It localises to the cell projection. It is found in the cilium. Its subcellular location is the flagellum. May function as part of the axonemal radial spoke complex 3 (RS3). Radial spoke complexes are important for ciliary motility. In Rattus norvegicus (Rat), this protein is Radial spoke head 10 homolog B (Rsph10b).